An 86-amino-acid chain; its full sequence is Protein Tat (86 aa).

The interaction with human CREBBP stretch occupies residues 1–24; it reads MEPVDPRLEPWKHPGSQPKTACTN. A transactivation region spans residues 1-48; it reads MEPVDPRLEPWKHPGSQPKTACTNCYCKKCCFHCQVCFITKALGISYG. Positions 22, 25, and 27 each coordinate Zn(2+). The segment at 22-37 is cysteine-rich; sequence CTNCYCKKCCFHCQVC. At K28 the chain carries N6-acetyllysine; by host PCAF. Residues C30, H33, C34, and C37 each contribute to the Zn(2+) site. The core stretch occupies residues 38 to 48; the sequence is FITKALGISYG. Residues 48 to 58 show a composition bias toward basic residues; the sequence is GRKKRRQRRRP. The disordered stretch occupies residues 48–86; sequence GRKKRRQRRRPPQGSQTHQVSLSKQPTSQSRGDPTGPKE. The Nuclear localization signal, RNA-binding (TAR), and protein transduction motif lies at 49–57; sequence RKKRRQRRR. Residues 49–86 are interaction with the host capping enzyme RNGTT; that stretch reads RKKRRQRRRPPQGSQTHQVSLSKQPTSQSRGDPTGPKE. 2 positions are modified to N6-acetyllysine; by host EP300 and GCN5L2: K50 and K51. Asymmetric dimethylarginine; by host PRMT6 is present on residues R52 and R53. Residues 62–79 show a composition bias toward polar residues; it reads SQTHQVSLSKQPTSQSRG. K71 is covalently cross-linked (Glycyl lysine isopeptide (Lys-Gly) (interchain with G-Cter in ubiquitin)). The Cell attachment site signature appears at 78 to 80; that stretch reads RGD.

This sequence belongs to the lentiviruses Tat family. In terms of assembly, interacts with host CCNT1. Associates with the P-TEFb complex composed at least of Tat, P-TEFb (CDK9 and CCNT1), TAR RNA, RNA Pol II. Recruits the HATs CREBBP, TAF1/TFIID, EP300, PCAF and GCN5L2. Interacts with host KAT5/Tip60; this interaction targets the latter to degradation. Interacts with the host deacetylase SIRT1. Interacts with host capping enzyme RNGTT; this interaction stimulates RNGTT. Binds to host KDR, and to the host integrins ITGAV/ITGB3 and ITGA5/ITGB1. Interacts with host KPNB1/importin beta-1 without previous binding to KPNA1/importin alpha-1. Interacts with EIF2AK2. Interacts with host nucleosome assembly protein NAP1L1; this interaction may be required for the transport of Tat within the nucleus, since the two proteins interact at the nuclear rim. Interacts with host C1QBP/SF2P32; this interaction involves lysine-acetylated Tat. Interacts with the host chemokine receptors CCR2, CCR3 and CXCR4. Interacts with host DPP4/CD26; this interaction may trigger an anti-proliferative effect. Interacts with host LDLR. Interacts with the host extracellular matrix metalloproteinase MMP1. Interacts with host PRMT6; this interaction mediates Tat's methylation. Interacts with, and is ubiquitinated by MDM2/Hdm2. Interacts with host PSMC3 and HTATIP2. Interacts with STAB1; this interaction may overcome SATB1-mediated repression of IL2 and IL2RA (interleukin) in T cells by binding to the same domain than HDAC1. Interacts (when acetylated) with human CDK13, thereby increasing HIV-1 mRNA splicing and promoting the production of the doubly spliced HIV-1 protein Nef. Interacts with host TBP; this interaction modulates the activity of transcriptional pre-initiation complex. Interacts with host RELA. Interacts with host PLSCR1; this interaction negatively regulates Tat transactivation activity by altering its subcellular distribution. Post-translationally, asymmetrical arginine methylation by host PRMT6 seems to diminish the transactivation capacity of Tat and affects the interaction with host CCNT1. Acetylation by EP300, CREBBP, GCN5L2/GCN5 and PCAF regulates the transactivation activity of Tat. EP300-mediated acetylation of Lys-50 promotes dissociation of Tat from the TAR RNA through the competitive binding to PCAF's bromodomain. In addition, the non-acetylated Tat's N-terminus can also interact with PCAF. PCAF-mediated acetylation of Lys-28 enhances Tat's binding to CCNT1. Lys-50 is deacetylated by SIRT1. In terms of processing, polyubiquitination by host MDM2 does not target Tat to degradation, but activates its transactivation function and fosters interaction with CCNT1 and TAR RNA. Post-translationally, phosphorylated by EIF2AK2 on serine and threonine residues adjacent to the basic region important for TAR RNA binding and function. Phosphorylation of Tat by EIF2AK2 is dependent on the prior activation of EIF2AK2 by dsRNA.

Its subcellular location is the host nucleus. It is found in the host nucleolus. The protein localises to the host cytoplasm. It localises to the secreted. In terms of biological role, transcriptional activator that increases RNA Pol II processivity, thereby increasing the level of full-length viral transcripts. Recognizes a hairpin structure at the 5'-LTR of the nascent viral mRNAs referred to as the transactivation responsive RNA element (TAR) and recruits the cyclin T1-CDK9 complex (P-TEFb complex) that will in turn hyperphosphorylate the RNA polymerase II to allow efficient elongation. The CDK9 component of P-TEFb and other Tat-activated kinases hyperphosphorylate the C-terminus of RNA Pol II that becomes stabilized and much more processive. Other factors such as HTATSF1/Tat-SF1, SUPT5H/SPT5, and HTATIP2 are also important for Tat's function. Besides its effect on RNA Pol II processivity, Tat induces chromatin remodeling of proviral genes by recruiting the histone acetyltransferases (HATs) CREBBP, EP300 and PCAF to the chromatin. This also contributes to the increase in proviral transcription rate, especially when the provirus integrates in transcriptionally silent region of the host genome. To ensure maximal activation of the LTR, Tat mediates nuclear translocation of NF-kappa-B by interacting with host RELA. Through its interaction with host TBP, Tat may also modulate transcription initiation. Tat can reactivate a latently infected cell by penetrating in it and transactivating its LTR promoter. In the cytoplasm, Tat is thought to act as a translational activator of HIV-1 mRNAs. Its function is as follows. Extracellular circulating Tat can be endocytosed by surrounding uninfected cells via the binding to several surface receptors such as CD26, CXCR4, heparan sulfate proteoglycans (HSPG) or LDLR. Neurons are rarely infected, but they internalize Tat via their LDLR. Through its interaction with nuclear HATs, Tat is potentially able to control the acetylation-dependent cellular gene expression. Modulates the expression of many cellular genes involved in cell survival, proliferation or in coding for cytokines or cytokine receptors. Tat plays a role in T-cell and neurons apoptosis. Tat induced neurotoxicity and apoptosis probably contribute to neuroAIDS. Circulating Tat also acts as a chemokine-like and/or growth factor-like molecule that binds to specific receptors on the surface of the cells, affecting many cellular pathways. In the vascular system, Tat binds to ITGAV/ITGB3 and ITGA5/ITGB1 integrins dimers at the surface of endothelial cells and competes with bFGF for heparin-binding sites, leading to an excess of soluble bFGF. The polypeptide is Protein Tat (Homo sapiens (Human)).